The chain runs to 341 residues: Dihydroorotate dehydrogenase (quinone) (341 aa).

Residues 59 to 63 (AGLDK) and Thr83 each bind FMN. Position 63 (Lys63) interacts with substrate. 108–112 (NRMGF) provides a ligand contact to substrate. FMN is bound by residues Asn136 and Asn169. Asn169 serves as a coordination point for substrate. The active-site Nucleophile is the Ser172. Asn174 is a binding site for substrate. Lys214 and Thr242 together coordinate FMN. 243–244 (NT) serves as a coordination point for substrate. FMN contacts are provided by residues Gly265, Gly294, and 315-316 (YS).

This sequence belongs to the dihydroorotate dehydrogenase family. Type 2 subfamily. In terms of assembly, monomer. It depends on FMN as a cofactor.

It is found in the cell membrane. It catalyses the reaction (S)-dihydroorotate + a quinone = orotate + a quinol. It functions in the pathway pyrimidine metabolism; UMP biosynthesis via de novo pathway; orotate from (S)-dihydroorotate (quinone route): step 1/1. Catalyzes the conversion of dihydroorotate to orotate with quinone as electron acceptor. This Neisseria meningitidis serogroup C (strain 053442) protein is Dihydroorotate dehydrogenase (quinone).